A 435-amino-acid chain; its full sequence is 5-methylthioadenosine/S-adenosylhomocysteine deaminase (435 aa).

His65 and His67 together coordinate Zn(2+). Positions 94, 150, and 189 each coordinate substrate. His216 contributes to the Zn(2+) binding site. 2 residues coordinate substrate: Glu219 and Asp304. A Zn(2+)-binding site is contributed by Asp304.

The protein belongs to the metallo-dependent hydrolases superfamily. MTA/SAH deaminase family. It depends on Zn(2+) as a cofactor.

The catalysed reaction is S-adenosyl-L-homocysteine + H2O + H(+) = S-inosyl-L-homocysteine + NH4(+). It carries out the reaction S-methyl-5'-thioadenosine + H2O + H(+) = S-methyl-5'-thioinosine + NH4(+). In terms of biological role, catalyzes the deamination of 5-methylthioadenosine and S-adenosyl-L-homocysteine into 5-methylthioinosine and S-inosyl-L-homocysteine, respectively. Is also able to deaminate adenosine. This chain is 5-methylthioadenosine/S-adenosylhomocysteine deaminase, found in Bacillus thuringiensis (strain Al Hakam).